A 556-amino-acid polypeptide reads, in one-letter code: 2-succinyl-5-enolpyruvyl-6-hydroxy-3-cyclohexene-1-carboxylate synthase (556 aa).

Belongs to the TPP enzyme family. MenD subfamily. In terms of assembly, homodimer. Mg(2+) is required as a cofactor. Requires Mn(2+) as cofactor. The cofactor is thiamine diphosphate.

The enzyme catalyses isochorismate + 2-oxoglutarate + H(+) = 5-enolpyruvoyl-6-hydroxy-2-succinyl-cyclohex-3-ene-1-carboxylate + CO2. It participates in quinol/quinone metabolism; 1,4-dihydroxy-2-naphthoate biosynthesis; 1,4-dihydroxy-2-naphthoate from chorismate: step 2/7. The protein operates within quinol/quinone metabolism; menaquinone biosynthesis. Functionally, catalyzes the thiamine diphosphate-dependent decarboxylation of 2-oxoglutarate and the subsequent addition of the resulting succinic semialdehyde-thiamine pyrophosphate anion to isochorismate to yield 2-succinyl-5-enolpyruvyl-6-hydroxy-3-cyclohexene-1-carboxylate (SEPHCHC). This is 2-succinyl-5-enolpyruvyl-6-hydroxy-3-cyclohexene-1-carboxylate synthase from Shigella boydii serotype 4 (strain Sb227).